Consider the following 402-residue polypeptide: Multidrug resistance protein MdtH (402 aa).

At 1–12 (MSRVSQARNLGK) the chain is on the cytoplasmic side. A helical membrane pass occupies residues 13 to 33 (YFLLIDNMLVVLGFFVVFPLI). The Periplasmic portion of the chain corresponds to 34 to 98 (SIRFVDQMGW…GFATMGIAHE (65 aa)). A helical membrane pass occupies residues 99 to 116 (PWLLWFSCFLSGLGGTLF). Over 117–138 (DPPRSALVVKLIRPEQRDRFFS) the chain is Cytoplasmic. A helical membrane pass occupies residues 139 to 159 (LLMMQDSAGAVIGALLGSWLL). The Periplasmic portion of the chain corresponds to 160–164 (QYDFR). A helical membrane pass occupies residues 165 to 185 (LVCATGAILFILCALFNAWLL). The Cytoplasmic segment spans residues 186–213 (PAWKLSTVRTPVREGMRRVMSDKRFVTY). A helical transmembrane segment spans residues 214 to 234 (VLTLAGYYMLAVQVMLMLPIM). Over 235 to 243 (VNDIAGSPA) the chain is Periplasmic. Residues 244-264 (AVKWMYAIEACLSLTLLYPIA) form a helical membrane-spanning segment. Residues 265 to 276 (RWSEKRFRLEHR) are Cytoplasmic-facing. Residues 277–297 (LMAGLLVMSLSMLPIGMVGNL) traverse the membrane as a helical segment. The Periplasmic segment spans residues 298–299 (QQ). The helical transmembrane segment at 300 to 320 (LFTLICAFYIGSVIAEPARET) threads the bilayer. At 321–339 (LSASLADARARGSYMGFSR) the chain is on the cytoplasmic side. A helical transmembrane segment spans residues 340–360 (LGLAIGGAIGYIGGGWLFDMG). At 361 to 367 (KALAQPE) the chain is on the periplasmic side. Residues 368–388 (LPWMMLGIIGFITFLALGWQF) traverse the membrane as a helical segment. Residues 389 to 402 (SHKRTPRRMLEPGA) lie on the Cytoplasmic side of the membrane.

Belongs to the major facilitator superfamily. DHA1 family. MdtH (TC 2.A.1.2.21) subfamily.

The protein localises to the cell inner membrane. This chain is Multidrug resistance protein MdtH, found in Salmonella typhimurium (strain LT2 / SGSC1412 / ATCC 700720).